The chain runs to 33 residues: MPTITIISYFGFLLASIIFTLVLFISLSKIQLI.

Residues 4–24 (ITIISYFGFLLASIIFTLVLF) traverse the membrane as a helical segment.

The protein belongs to the PetL family. The 4 large subunits of the cytochrome b6-f complex are cytochrome b6, subunit IV (17 kDa polypeptide, PetD), cytochrome f and the Rieske protein, while the 4 small subunits are PetG, PetL, PetM and PetN. The complex functions as a dimer.

The protein resides in the plastid. The protein localises to the chloroplast thylakoid membrane. In terms of biological role, component of the cytochrome b6-f complex, which mediates electron transfer between photosystem II (PSII) and photosystem I (PSI), cyclic electron flow around PSI, and state transitions. PetL is important for photoautotrophic growth as well as for electron transfer efficiency and stability of the cytochrome b6-f complex. The chain is Cytochrome b6-f complex subunit 6 from Pinus thunbergii (Japanese black pine).